The following is a 107-amino-acid chain: U1-lycotoxin-Ls1b (107 aa).

An N-terminal signal peptide occupies residues 1–20; the sequence is MMKALVVVALLVTLISYSSS. Residues 21 to 41 constitute a propeptide that is removed on maturation; that stretch reads EGIDDLEADELLSLMANEQTR. 4 disulfides stabilise this stretch: C44-C59, C51-C68, C58-C86, and C70-C84.

The protein belongs to the neurotoxin 19 (CSTX) family. 04 (U1-Lctx) subfamily. Expressed by the venom gland.

The protein localises to the secreted. The chain is U1-lycotoxin-Ls1b from Lycosa singoriensis (Wolf spider).